The sequence spans 338 residues: Heat-inducible transcription repressor HrcA (338 aa).

The protein belongs to the HrcA family.

Its function is as follows. Negative regulator of class I heat shock genes (grpE-dnaK-dnaJ and groELS operons). Prevents heat-shock induction of these operons. The chain is Heat-inducible transcription repressor HrcA from Streptomyces avermitilis (strain ATCC 31267 / DSM 46492 / JCM 5070 / NBRC 14893 / NCIMB 12804 / NRRL 8165 / MA-4680).